A 54-amino-acid polypeptide reads, in one-letter code: Putative neurotoxin-I (54 aa).

Cystine bridges form between Cys20-Cys42, Cys28-Cys51, and Cys32-Cys53.

Expressed by the venom gland.

The protein resides in the secreted. This is Putative neurotoxin-I from Lychas mucronatus (Chinese swimming scorpion).